The chain runs to 320 residues: Cytochrome f (320 aa).

An N-terminal signal peptide occupies residues 1 to 35; sequence MQTINTFSWIKEQITRSISISLILYIITRSSIANA. Heme is bound by residues tyrosine 36, cysteine 56, cysteine 59, and histidine 60. Residues 286–305 form a helical membrane-spanning segment; that stretch reads IQGLLFFFASVILAQIFLVL.

This sequence belongs to the cytochrome f family. As to quaternary structure, the 4 large subunits of the cytochrome b6-f complex are cytochrome b6, subunit IV (17 kDa polypeptide, petD), cytochrome f and the Rieske protein, while the 4 small subunits are PetG, PetL, PetM and PetN. The complex functions as a dimer. It depends on heme as a cofactor.

The protein localises to the plastid. The protein resides in the chloroplast thylakoid membrane. Functionally, component of the cytochrome b6-f complex, which mediates electron transfer between photosystem II (PSII) and photosystem I (PSI), cyclic electron flow around PSI, and state transitions. The polypeptide is Cytochrome f (petA) (Spinacia oleracea (Spinach)).